Here is a 1437-residue protein sequence, read N- to C-terminus: CRISPR-associated endoribonuclease Cas13a (1437 aa).

HEPN-like fold regions lie at residues 460 to 626 (LNAS…AMFE) and 1101 to 1437 (EFRD…QLKN). The segment at 1377-1419 (EVKEKKKPSDNNTGKGYSKRDRQQDRKEYDKYKEKKKKEGNFL) is disordered. Basic and acidic residues predominate over residues 1394 to 1416 (SKRDRQQDRKEYDKYKEKKKKEG).

The protein belongs to the CRISPR-associated endoribonuclease Cas13a family. Requires a divalent metal cation as cofactor.

Its activity is regulated as follows. Target RNA acts as an activator for non-specific ssRNA degradation. Functionally, CRISPR (clustered regularly interspaced short palindromic repeat), is an adaptive immune system that provides protection against mobile genetic elements (viruses, transposable elements and conjugative plasmids). CRISPR clusters contain sequences complementary to antecedent mobile elements and target invading nucleic acids. Unlike many single-component effectors, this CRISPR-Cas system targets RNA. CRISPR clusters are transcribed from pre-CRISPR RNA (crRNA) and processed into crRNA by this protein. Cleaves linear target ssRNA in a pre-crRNA-dependent fashion, preferentially around A residues. Binding a viable target RNA target activates this protein for non-specific RNA degradation in vitro (called collateral RNA degradation), but it is not very sensitive as it requires nanomolar levels of viable target RNA. The polypeptide is CRISPR-associated endoribonuclease Cas13a (Lachnospiraceae bacterium (strain NK4A179)).